We begin with the raw amino-acid sequence, 425 residues long: MTGIKKGKNKKKNMKNDDRYKELDSLITNGSEIGNNSGRSCVKRFFKIIGNEMKNNVYVYLLSILYLCVCVMNKVFAKRTLNKMGNYSFVTSETHNIICIIVFQLLYFIYRKTSSSSVYKNESQKNFGWQFFLISLLDASTVIISMIGLTRTTGNIQSFIMQLIIPVNMYFWFMFLGYRYHLFNYLGAFIILITIAVVETFLSFETQGENSIIFNLIMISAFNTLSFSNMTREVVFKKHKINILRLNAMVVLFQFFTSLLVLPVYNIPFLKEIYMPFSEMSTNINNGLRCLFYGENTIVENCGVGMVKMCDNCEGAWKTFITFSFFNICDNLLACYIIDKFSTMTYTIVSCIQGPAITIAYYFKFLAGDAVRKPRILDFLTLFGYLFGTIIYRIGNIILEKKQVIKSQNSNDSEAELTSIETSRA.

Topologically, residues 1–56 are cytoplasmic; sequence MTGIKKGKNKKKNMKNDDRYKELDSLITNGSEIGNNSGRSCVKRFFKIIGNEMKNN. The chain crosses the membrane as a helical span at residues 57 to 77; that stretch reads VYVYLLSILYLCVCVMNKVFA. Residues 78–88 lie on the Vacuolar side of the membrane; sequence KRTLNKMGNYS. Residue Asn86 is glycosylated (N-linked (GlcNAc...) asparagine). The chain crosses the membrane as a helical span at residues 89–109; the sequence is FVTSETHNIICIIVFQLLYFI. The Cytoplasmic portion of the chain corresponds to 110–126; that stretch reads YRKTSSSSVYKNESQKN. A helical membrane pass occupies residues 127-147; that stretch reads FGWQFFLISLLDASTVIISMI. Residues 148 to 157 lie on the Vacuolar side of the membrane; sequence GLTRTTGNIQ. Residues 158-178 form a helical membrane-spanning segment; sequence SFIMQLIIPVNMYFWFMFLGY. Residues 179–181 lie on the Cytoplasmic side of the membrane; sequence RYH. The helical transmembrane segment at 182–202 threads the bilayer; sequence LFNYLGAFIILITIAVVETFL. Residues 203–210 are Vacuolar-facing; sequence SFETQGEN. The chain crosses the membrane as a helical span at residues 211-231; sequence SIIFNLIMISAFNTLSFSNMT. The Cytoplasmic portion of the chain corresponds to 232-249; sequence REVVFKKHKINILRLNAM. The helical transmembrane segment at 250–270 threads the bilayer; it reads VVLFQFFTSLLVLPVYNIPFL. Over 271 to 318 the chain is Vacuolar; that stretch reads KEIYMPFSEMSTNINNGLRCLFYGENTIVENCGVGMVKMCDNCEGAWK. 2 disulfides stabilise this stretch: Cys290-Cys313 and Cys302-Cys310. The helical transmembrane segment at 319–339 threads the bilayer; it reads TFITFSFFNICDNLLACYIID. The Cytoplasmic portion of the chain corresponds to 340 to 347; that stretch reads KFSTMTYT. The helical transmembrane segment at 348–368 threads the bilayer; the sequence is IVSCIQGPAITIAYYFKFLAG. The Vacuolar segment spans residues 369-378; that stretch reads DAVRKPRILD. A helical transmembrane segment spans residues 379–399; that stretch reads FLTLFGYLFGTIIYRIGNIIL. Topologically, residues 400–425 are cytoplasmic; the sequence is EKKQVIKSQNSNDSEAELTSIETSRA.

This sequence belongs to the CRT-like transporter family.

Its subcellular location is the vacuole membrane. In terms of biological role, nutrient transporter. Involved in maintaining the osmotic homeostasis of the digestive vacuole. This chain is Putative chloroquine resistance transporter, found in Plasmodium berghei.